Reading from the N-terminus, the 315-residue chain is MTTPSIKLNSGYDMPLVGFGLWKVNKETCADQIYHAIKAGYRLFDGACDYGNEVEAGKGVARAIQEGIVKREELFIVSKLWNSFHDGDRVEPICRKQLADWGLDYFDLFIVHFPIALKYVDPAVRYPPGWLSENNKLEFSNASIQETWTAMESLVDKKLARSIGVSNFSAQLLMDLLRYARIRPATLQIEHHPYLTQERLVTYAQKEGIAVTAYSSFGPLSFVELDLKDAHETPKLFDHDVIKGIAQKHGRTPAQVLLRWATQRNIAVIPKSNDPTRLAQNLDVTGWDLEASEIEAISALNRNLRFNDPLAIPVV.

The active-site Proton donor is Tyr50. His112 serves as a coordination point for substrate. NAD(+) contacts are provided by residues 166–167, 215–224, and 271–281; these read SN, SSFGPLSFVE, and KSNDPTRLAQN.

It belongs to the aldo/keto reductase family.

The enzyme catalyses xylitol + NAD(+) = D-xylose + NADH + H(+). It carries out the reaction xylitol + NADP(+) = D-xylose + NADPH + H(+). It participates in carbohydrate metabolism; D-xylose degradation. Catalyzes the initial reaction in the xylose utilization pathway by reducing D-xylose into xylitol. Xylose is a major component of hemicelluloses such as xylan. Most fungi utilize D-xylose via three enzymatic reactions, xylose reductase (XR), xylitol dehydrogenase (XDH), and xylulokinase, to form xylulose 5-phosphate, which enters pentose phosphate pathway. In Aspergillus fumigatus (strain ATCC MYA-4609 / CBS 101355 / FGSC A1100 / Af293) (Neosartorya fumigata), this protein is Probable NAD(P)H-dependent D-xylose reductase xyl1 (xyl1).